The primary structure comprises 633 residues: Lysophospholipase 1 (633 aa).

The first 20 residues, 1–20, serve as a signal peptide directing secretion; it reads MKTTTVACAVAGLLFSCVSG. In terms of domain architecture, PLA2c spans 47 to 594; the sequence is GCPASRPTIR…QRYCWDGSLN (548 aa). 18 N-linked (GlcNAc...) asparagine glycosylation sites follow: asparagine 64, asparagine 104, asparagine 139, asparagine 173, asparagine 246, asparagine 290, asparagine 329, asparagine 358, asparagine 397, asparagine 450, asparagine 463, asparagine 469, asparagine 497, asparagine 500, asparagine 521, asparagine 549, asparagine 555, and asparagine 594. A lipid anchor (GPI-like-anchor amidated serine) is attached at serine 609. Positions 610–633 are cleaved as a propeptide — removed in mature form; it reads AASGIIPSISTVAMAVVFAAWTIF.

The protein belongs to the lysophospholipase family. The GPI-like anchor contains a phosphoceramide lipid group. The anchor position has not been determined.

The protein localises to the cell membrane. It carries out the reaction a 1-acyl-sn-glycero-3-phosphocholine + H2O = sn-glycerol 3-phosphocholine + a fatty acid + H(+). Catalyzes the release of fatty acids from lysophospholipids. The sequence is that of Lysophospholipase 1 (plb1) from Aspergillus fumigatus (strain CBS 144.89 / FGSC A1163 / CEA10) (Neosartorya fumigata).